Consider the following 131-residue polypeptide: Rhodopsin (131 aa).

Residues 1-16 (CGIDYYTRAPGYNNES) lie on the Extracellular side of the membrane. The N-linked (GlcNAc...) asparagine glycan is linked to asparagine 14. A helical membrane pass occupies residues 17 to 38 (FVIYMFIVHFLIPLFIISFCYG). Residues 39–66 (NLLCAVKAAAAAQEESETTQRAEREVTR) are Cytoplasmic-facing. A helical membrane pass occupies residues 67–88 (MVIMMVISYLVSWVPYASVAWY). The Extracellular segment spans residues 89–100 (IFSNQGSEFGPV). A helical membrane pass occupies residues 101 to 122 (FMTIPAFFAKSSALYNPLIYVL). At lysine 110 the chain carries N6-(retinylidene)lysine. Over 123–131 (MNKQFRHCM) the chain is Cytoplasmic.

Belongs to the G-protein coupled receptor 1 family. Opsin subfamily. Post-translationally, phosphorylated on some or all of the serine and threonine residues present in the C-terminal region. In terms of processing, contains one covalently linked retinal chromophore.

It localises to the membrane. The protein localises to the cell projection. Its subcellular location is the cilium. The protein resides in the photoreceptor outer segment. Photoreceptor required for image-forming vision at low light intensity. While most salt water fish species use retinal as chromophore, most freshwater fish use 3-dehydroretinal, or a mixture of retinal and 3-dehydroretinal. Light-induced isomerization of 11-cis to all-trans retinal triggers a conformational change that activates signaling via G-proteins. Subsequent receptor phosphorylation mediates displacement of the bound G-protein alpha subunit by arrestin and terminates signaling. The polypeptide is Rhodopsin (rho) (Coregonus autumnalis (Arctic cisco)).